Reading from the N-terminus, the 237-residue chain is Uridylate kinase (237 aa).

9–12 (KLSG) provides a ligand contact to ATP. Gly-51 provides a ligand contact to UMP. Positions 52 and 56 each coordinate ATP. UMP contacts are provided by residues Asp-71 and 132–139 (CGNPFFTT). Residues Thr-159, Tyr-165, and Asp-168 each contribute to the ATP site.

Belongs to the UMP kinase family. Homohexamer.

It localises to the cytoplasm. The enzyme catalyses UMP + ATP = UDP + ADP. Its pathway is pyrimidine metabolism; CTP biosynthesis via de novo pathway; UDP from UMP (UMPK route): step 1/1. With respect to regulation, inhibited by UTP. Its function is as follows. Catalyzes the reversible phosphorylation of UMP to UDP. This is Uridylate kinase from Prochlorococcus marinus (strain NATL1A).